A 151-amino-acid chain; its full sequence is Ribosome maturation factor RimP (151 aa).

This sequence belongs to the RimP family.

Its subcellular location is the cytoplasm. Required for maturation of 30S ribosomal subunits. The chain is Ribosome maturation factor RimP from Colwellia psychrerythraea (strain 34H / ATCC BAA-681) (Vibrio psychroerythus).